The primary structure comprises 563 residues: Kelch repeat and BTB domain-containing protein 1 (563 aa).

The region spanning Cys-21 to Asn-88 is the BTB domain. Residues Cys-123 to Ser-219 form the BACK domain. Kelch repeat units lie at residues Ile-252 to Asn-297, Ile-298 to Glu-346, Tyr-347 to Gly-395, Ile-397 to Gly-441, Lys-442 to Asn-492, and Leu-494 to Ile-538.

Interacts (via BTB domain) with host CUL3.

The protein localises to the host cytoplasm. Functionally, probable substrate-specific adapter of CUL3-containing E3 ubiquitin-protein ligases which mediate the ubiquitination and subsequent proteasomal degradation of host target proteins. This chain is Kelch repeat and BTB domain-containing protein 1 (KBTB1), found in Cowpox virus (strain Brighton Red) (CPV).